Here is a 204-residue protein sequence, read N- to C-terminus: Hydrophilin YNL190W (204 aa).

An N-terminal signal peptide occupies residues 1–20 (MKFSSVTAITLATVATVATA). Residues 35–46 (SDGSLTTTTSTH) are compositionally biased toward low complexity. Residues 35 to 179 (SDGSLTTTTS…ARKNNAAPGP (145 aa)) form a disordered region. Positions 47–59 (TTHKYGKFNKTSK) are enriched in basic residues. N-linked (GlcNAc...) asparagine glycans are attached at residues N55, N64, N75, N84, N95, N104, N115, N124, N135, N144, and N155. A compositionally biased stretch (basic residues) spans 67–79 (GTHKYGKFNKTSK). The span at 87–99 (GTHKYGKFNKTSK) shows a compositional bias: basic residues. A compositionally biased stretch (basic residues) spans 107 to 119 (GTHKYGKFNKTSK). Residues 127-139 (GTHKYGKFNKTSK) are compositionally biased toward basic residues. Residues 147–156 (GTHKYGKFNK) are compositionally biased toward basic residues. A lipid anchor (GPI-anchor amidated asparagine) is attached at N174. A propeptide spans 175–204 (AAPGPSNFNSIKLFGVTAGSAAVAGALLLL) (removed in mature form).

The protein belongs to the PGA14 family. Post-translationally, the GPI-anchor is attached to the protein in the endoplasmic reticulum and serves to target the protein to the cell surface. There, the glucosamine-inositol phospholipid moiety is cleaved off and the GPI-modified mannoprotein is covalently attached via its lipidless GPI glycan remnant to the 1,6-beta-glucan of the outer cell wall layer.

The protein localises to the secreted. Its subcellular location is the cell wall. It is found in the membrane. Hydrophilin which is essential to overcome the simple stress of the desiccation-rehydration process. This Saccharomyces cerevisiae (strain ATCC 204508 / S288c) (Baker's yeast) protein is Hydrophilin YNL190W.